The primary structure comprises 2128 residues: Non-reducing polyketide synthase albA (2128 aa).

An N-terminal acylcarrier protein transacylase domain (SAT) region spans residues 8–244; sequence YLFGDQTSDI…VKAPIHGPYH (237 aa). Residues 375 to 806 form the Ketosynthase family 3 (KS3) domain; the sequence is NSKIAIIGMS…GGNTALLLED (432 aa). Active-site for beta-ketoacyl synthase activity residues include Cys547, His682, and His724. The interval 912 to 1232 is malonyl-CoA:ACP transacylase (MAT) domain; the sequence is FVFTGQGAQY…LASLHLAGID (321 aa). Ser1001 (for acyl/malonyl transferase activity) is an active-site residue. The tract at residues 1286-1425 is N-terminal hotdog fold; the sequence is HEYLTTAAQK…CTVRFFDCAA (140 aa). The 313-residue stretch at 1286–1598 folds into the PKS/mFAS DH domain; it reads HEYLTTAAQK…FQALSRKILD (313 aa). Residues 1290–1603 are product template (PT) domain; the sequence is TTAAQKVIET…RKILDTVLPP (314 aa). His1326 (proton acceptor; for dehydratase activity) is an active-site residue. Residues 1452 to 1598 are C-terminal hotdog fold; that stretch reads DAHRLGRGMV…FQALSRKILD (147 aa). Asp1511 acts as the Proton donor; for dehydratase activity in catalysis. The region spanning 1618 to 1695 is the Carrier 1 domain; that stretch reads PSAPSLVKRA…DFKQFLAPMS (78 aa). Ser1655 carries the O-(pantetheine 4'-phosphoryl)serine modification. The interval 1695–1740 is disordered; that stretch reads SQGEASDGSTSDPESSSSFNGGSSTDESSAGSPVSSPPNEKVTQVE. Over residues 1700 to 1723 the composition is skewed to low complexity; the sequence is SDGSTSDPESSSSFNGGSSTDESS. The segment covering 1724–1740 has biased composition (polar residues); sequence AGSPVSSPPNEKVTQVE. Positions 1739–1816 constitute a Carrier 2 domain; the sequence is VEQHATIKEI…DVEDALGLKP (78 aa). At Ser1776 the chain carries O-(pantetheine 4'-phosphoryl)serine. Residues 1854–2126 form a claisen cyclase domain region; it reads SPHPRSTSIL…ELGSFIGNAM (273 aa). The active-site For Claisen cyclase activity is Ser1944.

It catalyses the reaction 6 malonyl-CoA + acetyl-CoA + 6 H(+) = naphtopyrone YWA1 + 6 CO2 + 7 CoA + H2O. The protein operates within secondary metabolite biosynthesis. Functionally, non-reducing polyketide synthase; part of the gene cluster that mediates the biosynthesis of aurasperone B, a dimeric gamma-naphthopyrone. The first step in the biosynthesis of aurasperone B is the production of gamma-naphthopyrone precursor YWA1 by the non-reducing polyketide synthase albA, via condensation of one acetyl-CoA starter unit with 6 malonyl-CoA units. YWA1 is then methylated by aunE at position C-6 to yield foncesin which is further methylated at position C-8 by aunD to produce fonsecin B. A key enzyme in the biosynthetic pathway is the cytochrome P450 monooxygenase aunB which catalyzes the oxidative dimerization of fonsecin B to aurasperone B. AunB also catalyzes the oxidative dimerization of rubrofusarin B into aurasperone A. This Aspergillus niger (strain ATCC 1015 / CBS 113.46 / FGSC A1144 / LSHB Ac4 / NCTC 3858a / NRRL 328 / USDA 3528.7) protein is Non-reducing polyketide synthase albA.